Consider the following 597-residue polypeptide: Probable E3 ubiquitin-protein ligase ARI1 (597 aa).

Residues 119-333 (SQMSCDVCME…IAGHSCGRYQ (215 aa)) form a TRIAD supradomain region. The Zn(2+) site is built by cysteine 123, cysteine 126, cysteine 140, histidine 142, cysteine 145, cysteine 148, cysteine 167, cysteine 172, cysteine 214, cysteine 220, cysteine 236, cysteine 238, cysteine 243, cysteine 246, histidine 251, cysteine 256, cysteine 283, and cysteine 286. An RING-type 1 zinc finger spans residues 123-172 (CDVCMEDLPGDHMTRMDCGHCFCNNCWTEHFTVQINEGQSKRIRCMAHQC). The IBR-type zinc finger occupies 194–256 (AKFDRYLLES…LCQAHSPCSC (63 aa)). Residues 283–311 (CPKCYKPVEKNGGCNLVRCICGQCFCWLC) form an RING-type 2; atypical zinc finger. Residue cysteine 296 is part of the active site. Zn(2+) contacts are provided by cysteine 301, cysteine 303, cysteine 308, cysteine 311, histidine 319, and cysteine 329. Residues 536–575 (FQPLDSGTSGVTSRPEQASGSRSSEDTICSSSQKRPKKEG) form a disordered region. Over residues 540–568 (DSGTSGVTSRPEQASGSRSSEDTICSSSQ) the composition is skewed to polar residues.

Belongs to the RBR family. Ariadne subfamily. The cofactor is Zn(2+). As to expression, ubiquitous.

The enzyme catalyses [E2 ubiquitin-conjugating enzyme]-S-ubiquitinyl-L-cysteine + [acceptor protein]-L-lysine = [E2 ubiquitin-conjugating enzyme]-L-cysteine + [acceptor protein]-N(6)-ubiquitinyl-L-lysine.. It participates in protein modification; protein ubiquitination. Its function is as follows. Might act as an E3 ubiquitin-protein ligase, or as part of E3 complex, which accepts ubiquitin from specific E2 ubiquitin-conjugating enzymes and then transfers it to substrates. The polypeptide is Probable E3 ubiquitin-protein ligase ARI1 (ARI1) (Arabidopsis thaliana (Mouse-ear cress)).